Consider the following 550-residue polypeptide: Methionine--tRNA ligase (550 aa).

Positions 13-23 match the 'HIGH' region motif; that stretch reads PYANGPLHFGH. Residues C145, C148, C158, and C161 each contribute to the Zn(2+) site. The short motif at 331–335 is the 'KMSKS' region element; that stretch reads QFSKS. K334 contributes to the ATP binding site.

The protein belongs to the class-I aminoacyl-tRNA synthetase family. MetG type 1 subfamily. Monomer. It depends on Zn(2+) as a cofactor.

Its subcellular location is the cytoplasm. It carries out the reaction tRNA(Met) + L-methionine + ATP = L-methionyl-tRNA(Met) + AMP + diphosphate. Functionally, is required not only for elongation of protein synthesis but also for the initiation of all mRNA translation through initiator tRNA(fMet) aminoacylation. The polypeptide is Methionine--tRNA ligase (metG) (Chlamydia trachomatis serovar D (strain ATCC VR-885 / DSM 19411 / UW-3/Cx)).